The chain runs to 395 residues: ATP phosphoribosyltransferase regulatory subunit (395 aa).

It belongs to the class-II aminoacyl-tRNA synthetase family. HisZ subfamily. In terms of assembly, heteromultimer composed of HisG and HisZ subunits.

The protein resides in the cytoplasm. It participates in amino-acid biosynthesis; L-histidine biosynthesis; L-histidine from 5-phospho-alpha-D-ribose 1-diphosphate: step 1/9. Required for the first step of histidine biosynthesis. May allow the feedback regulation of ATP phosphoribosyltransferase activity by histidine. The polypeptide is ATP phosphoribosyltransferase regulatory subunit (Pseudomonas syringae pv. tomato (strain ATCC BAA-871 / DC3000)).